We begin with the raw amino-acid sequence, 110 residues long: U1-lycotoxin-Ls1jj (110 aa).

The signal sequence occupies residues 1–20; that stretch reads MKFVLLFGVLLVTLFSYSSA. Positions 21–44 are excised as a propeptide; that stretch reads EMLDDFDQADEDELLSLIEKEEAR. Intrachain disulfides connect Cys47–Cys62, Cys54–Cys71, Cys61–Cys89, and Cys73–Cys87.

The protein belongs to the neurotoxin 19 (CSTX) family. 03 subfamily. In terms of tissue distribution, expressed by the venom gland.

The protein localises to the secreted. The chain is U1-lycotoxin-Ls1jj from Lycosa singoriensis (Wolf spider).